We begin with the raw amino-acid sequence, 99 residues long: PE-PGRS family protein PE25 (99 aa).

The PE domain maps to 1–92 (MSFVITNPEA…GADKYATAEA (92 aa)). Serine 2 carries the N-acetylserine modification.

Belongs to the mycobacterial PE family. As to quaternary structure, forms a heterodimer with PPE41. The dimer forms a 1:1:1 heterotrimeric complex with EspG5. Interacts with PPE51.

Its subcellular location is the secreted. In terms of biological role, the PE25/PPE41 dimer induces both a strong humoral and cellular immune response. PE25 protein alone induces low response. The dimer induces necrosis, but not apoptosis, in mouse macrophage cells. It also induces activation and maturation of mouse dendritic cells and drives Th2-biased immune responses. This is PE-PGRS family protein PE25 from Mycobacterium tuberculosis (strain ATCC 25618 / H37Rv).